We begin with the raw amino-acid sequence, 872 residues long: C-mannosyltransferase dpy-19 homolog (872 aa).

Helical transmembrane passes span Pro4–Val24, Phe126–Ser146, Ile149–Ile169, Phe179–Ile199, Ile211–Ile231, Val257–Gly277, Ser279–Val299, Phe326–Asn346, and Val399–Phe419. A coiled-coil region spans residues Lys508 to Asp535. A disordered region spans residues Ile514–Val620. The span at Glu524–Ala533 shows a compositional bias: basic and acidic residues. The segment covering Thr541–Glu551 has biased composition (acidic residues). 2 helical membrane-spanning segments follow: residues Ile627 to Leu647 and Asn678 to Val698.

The protein belongs to the dpy-19 family.

It localises to the membrane. Functionally, probable C-mannosyltransferase that mediates C-mannosylation of tryptophan residues on target proteins. In Drosophila melanogaster (Fruit fly), this protein is C-mannosyltransferase dpy-19 homolog.